Reading from the N-terminus, the 86-residue chain is Large ribosomal subunit protein bL31 (86 aa).

Residues 64–86 are disordered; the sequence is KYGMGSANSSESKDQKEEKDSKK. Basic and acidic residues predominate over residues 74 to 86; the sequence is ESKDQKEEKDSKK.

It belongs to the bacterial ribosomal protein bL31 family. Type A subfamily. In terms of assembly, part of the 50S ribosomal subunit.

In terms of biological role, binds the 23S rRNA. The sequence is that of Large ribosomal subunit protein bL31 from Prochlorococcus marinus (strain MIT 9301).